We begin with the raw amino-acid sequence, 282 residues long: Small-conductance mechanosensitive channel (282 aa).

At 1–23 (MWADIYHKLVEIYDIKAVKFLLD) the chain is on the periplasmic side. The helical transmembrane segment at 24–46 (VLKILIIAFIGIKFADFLIYRFY) threads the bilayer. At 47–66 (KLYSKSKIQLPQRKIDTLTS) the chain is on the cytoplasmic side. The helical transmembrane segment at 67–87 (LTKNAVRYIIYFLAGASILKL) threads the bilayer. The Periplasmic portion of the chain corresponds to 88-89 (FN). The chain crosses the membrane as a helical span at residues 90-110 (IDMTSLLAVAGIGSLAIGFGA). Over 111 to 282 (QNLVKDMISG…TVILSEKKTN (172 aa)) the chain is Cytoplasmic.

It belongs to the MscS (TC 1.A.23) family. As to quaternary structure, homoheptamer.

It localises to the cell inner membrane. Its function is as follows. Mechanosensitive ion channel that participates in the regulation of osmotic pressure changes within the cell, opening in response to stretch forces in the membrane lipid bilayer, without the need for other proteins. Has high selectivity for anions, and may contribute to resistance to hypoosmotic shock. The protein is Small-conductance mechanosensitive channel of Caldanaerobacter subterraneus subsp. tengcongensis (strain DSM 15242 / JCM 11007 / NBRC 100824 / MB4) (Thermoanaerobacter tengcongensis).